Consider the following 541-residue polypeptide: Phenazine N-monooxygenase PhzNO1 (541 aa).

FAD-binding positions include Asp-39, 47–50, 59–60, Tyr-65, and Ile-112; these read TWYW and DT. 57–59 provides a ligand contact to NADP(+); it reads RAD. Residues 186–192, 209–210, and Trp-492 contribute to the NADP(+) site; these read TGSTGVQ and RS.

This sequence belongs to the FAD-binding monooxygenase family. The cofactor is FAD.

It carries out the reaction 1,6-dihydroxyphenazine + NADPH + O2 = 1,6-dihydroxyphenazine N(5)-oxide + NADP(+) + H2O. The enzyme catalyses 1,6-dihydroxyphenazine N(5)-oxide + NADPH + O2 = 1,6-dihydroxyphenazine N(5),N(10)-dioxide + NADP(+) + H2O. The catalysed reaction is 1-hydroxy-6-methoxyphenazine + NADPH + O2 = 1-hydroxy-6-methoxyphenazine N(10)-oxide + NADP(+) + H2O. It catalyses the reaction quinolin-8-ol + NADPH + O2 = 8-hydroxyquinoline N-oxide + NADP(+) + H2O. In terms of biological role, involved in the biosynthesis of phenazine natural products including myxin, an N(5),N(10)-dioxide phenazine antiobiotic, which has antimicrobial activity. Catalyzes the aromatic N-oxidations of phenazines, such as 1,6-dihydroxyphenazine (DHP), 1,6-dihydroxyphenazine N(5)-oxide (DHPO) and 1-hydroxy-6-methoxyphenazine to produce DHPO, iodinin (1,6-dihydroxyphenazine N(5),N(10)-dioxide) and 1-hydroxy-6-methoxyphenazine N(10)-oxide, respectively. Also catalyzes the N-oxidation of 8-hydroxyquinoline, but not 6-hydroxyquinoline (6-HQ), quinoline, quinoxaline, quinine and 2-phenylpyridine. This Lysobacter antibioticus protein is Phenazine N-monooxygenase PhzNO1.